The chain runs to 524 residues: Putative ATP-dependent RNA helicase R458 (524 aa).

Residues 125-338 (VPELIQRKDT…NSYFRKYSPI (214 aa)) form the Helicase ATP-binding domain. Residue 138–145 (FKSGTGKT) participates in ATP binding. The DEFD box signature appears at 268-271 (DEFD). In terms of domain architecture, Helicase C-terminal spans 373–524 (IILDLLKQCR…QLPGDLSTLL (152 aa)).

The protein belongs to the DEAD box helicase family. eIF4A subfamily.

The enzyme catalyses ATP + H2O = ADP + phosphate + H(+). In terms of biological role, putative ATP-dependent RNA helicase. The polypeptide is Putative ATP-dependent RNA helicase R458 (Acanthamoeba polyphaga mimivirus (APMV)).